We begin with the raw amino-acid sequence, 311 residues long: Ribosomal RNA small subunit methyltransferase H (311 aa).

Residues 32–34 (AGH), D52, F79, D100, and Q107 each bind S-adenosyl-L-methionine.

The protein belongs to the methyltransferase superfamily. RsmH family.

It is found in the cytoplasm. The catalysed reaction is cytidine(1402) in 16S rRNA + S-adenosyl-L-methionine = N(4)-methylcytidine(1402) in 16S rRNA + S-adenosyl-L-homocysteine + H(+). Specifically methylates the N4 position of cytidine in position 1402 (C1402) of 16S rRNA. The sequence is that of Ribosomal RNA small subunit methyltransferase H from Staphylococcus haemolyticus (strain JCSC1435).